A 573-amino-acid polypeptide reads, in one-letter code: Potassium-transporting ATPase potassium-binding subunit (573 aa).

10 helical membrane passes run 6–26, 66–86, 135–155, 177–197, 257–277, 283–303, 382–402, 428–448, 493–513, and 537–557; these read ILFA…GSYI, FFSL…ILLL, ALAV…IALI, VFWI…FQGV, IQMV…GKWV, GWLI…VMTI, IFGG…LAVF, MFAL…AAVI, ITIA…VIML, and FIFA…TIFP.

Belongs to the KdpA family. In terms of assembly, the system is composed of three essential subunits: KdpA, KdpB and KdpC.

It localises to the cell inner membrane. Its function is as follows. Part of the high-affinity ATP-driven potassium transport (or Kdp) system, which catalyzes the hydrolysis of ATP coupled with the electrogenic transport of potassium into the cytoplasm. This subunit binds the periplasmic potassium ions and delivers the ions to the membrane domain of KdpB through an intramembrane tunnel. This is Potassium-transporting ATPase potassium-binding subunit from Francisella tularensis subsp. tularensis (strain WY96-3418).